The primary structure comprises 614 residues: Vitamin B12 transporter BtuB (614 aa).

A signal peptide spans 1 to 20; that stretch reads MIKKASLLTACSVTAFSAWA. A TonB box motif is present at residues 26 to 33; the sequence is DTLVVTAN. One can recognise a TBDR plug domain in the interval 38-152; it reads PRSTVLAPTT…IGGVVNIITT (115 aa). Cyanocob(III)alamin-binding positions include Leu-83, Ser-85, Asn-92, and 110-111; that span reads VS. Residues 155-614 enclose the TBDR beta-barrel domain; it reads EPGTEISAGW…EYTLSGSYTF (460 aa). A run of 3 beta stranded transmembrane segments spans residues 158 to 165, 169 to 178, and 184 to 195; these read TEISAGWG, YQNYDVSTQQ, and TRVTLLGDYAHT. The Ca(2+) site is built by Asp-199, Gln-211, Asp-213, and Asp-215. Transmembrane regions (beta stranded) follow at residues 217–227 and 232–248; these read FLSKTLYGALE and DAWS…NRTN. 2 residues coordinate Ca(2+): Tyr-249 and Asp-250. Ala-251 contacts cyanocob(III)alamin. Ca(2+) is bound at residue Asp-261. 14 consecutive transmembrane segments (beta stranded) span residues 263–277, 279–296, 309–325, 328–337, 353–369, 371–381, 385–400, 403–417, 434–443, 449–458, 473–490, 494–509, 517–529, and 535–550; these read RKLY…LRYN, ELIK…KDYN, TLDE…NNVI, HGSIGAGVDW, YDQR…QQVG, FTFEGAARSDD, FGRH…WEFI, YRFI…KAPN, KSKQWEGAFE, VNWRISGYRN, YYNE…TANF, PLTH…ARNA, RRAK…QLDW, and DWGI…YDKD. Thr-309 provides a ligand contact to cyanocob(III)alamin. Cyanocob(III)alamin is bound at residue Arg-517. A cyanocob(III)alamin-binding site is contributed by Tyr-551. The next 3 beta stranded transmembrane spans lie at 558 to 572, 585 to 596, and 602 to 614; these read TVKM…LAVA, IANLFDKDYETV, and AGRE…SYTF. A TonB C-terminal box motif is present at residues 597-614; that stretch reads YGYQTAGREYTLSGSYTF.

This sequence belongs to the TonB-dependent receptor family. BtuB (TC 1.B.14.3.1) subfamily.

The protein localises to the cell outer membrane. Involved in the active translocation of vitamin B12 (cyanocobalamin) across the outer membrane to the periplasmic space. It derives its energy for transport by interacting with the trans-periplasmic membrane protein TonB. The chain is Vitamin B12 transporter BtuB from Escherichia coli O9:H4 (strain HS).